Consider the following 342-residue polypeptide: L-threonine 3-dehydrogenase (342 aa).

Residue C38 coordinates Zn(2+). Residues T40 and H43 each act as charge relay system in the active site. Zn(2+) contacts are provided by H63, E64, C93, C96, C99, and C107. NAD(+)-binding positions include I175, D195, R200, L262–I264, and I286–Y287.

Belongs to the zinc-containing alcohol dehydrogenase family. As to quaternary structure, homotetramer. It depends on Zn(2+) as a cofactor.

The protein localises to the cytoplasm. The catalysed reaction is L-threonine + NAD(+) = (2S)-2-amino-3-oxobutanoate + NADH + H(+). The protein operates within amino-acid degradation; L-threonine degradation via oxydo-reductase pathway; glycine from L-threonine: step 1/2. Its function is as follows. Catalyzes the NAD(+)-dependent oxidation of L-threonine to 2-amino-3-ketobutyrate. The protein is L-threonine 3-dehydrogenase of Burkholderia multivorans (strain ATCC 17616 / 249).